Reading from the N-terminus, the 749-residue chain is Ribosomal RNA large subunit methyltransferase K/L (749 aa).

The THUMP domain occupies glutamine 43–leucine 154. The segment at valine 386–threonine 406 is disordered.

It belongs to the methyltransferase superfamily. RlmKL family.

It is found in the cytoplasm. The catalysed reaction is guanosine(2445) in 23S rRNA + S-adenosyl-L-methionine = N(2)-methylguanosine(2445) in 23S rRNA + S-adenosyl-L-homocysteine + H(+). It carries out the reaction guanosine(2069) in 23S rRNA + S-adenosyl-L-methionine = N(2)-methylguanosine(2069) in 23S rRNA + S-adenosyl-L-homocysteine + H(+). Functionally, specifically methylates the guanine in position 2445 (m2G2445) and the guanine in position 2069 (m7G2069) of 23S rRNA. This Psychromonas ingrahamii (strain DSM 17664 / CCUG 51855 / 37) protein is Ribosomal RNA large subunit methyltransferase K/L.